The following is a 120-amino-acid chain: Large ribosomal subunit protein uL18 (120 aa).

Belongs to the universal ribosomal protein uL18 family. As to quaternary structure, part of the 50S ribosomal subunit; part of the 5S rRNA/L5/L18/L25 subcomplex. Contacts the 5S and 23S rRNAs.

Functionally, this is one of the proteins that bind and probably mediate the attachment of the 5S RNA into the large ribosomal subunit, where it forms part of the central protuberance. This Afipia carboxidovorans (strain ATCC 49405 / DSM 1227 / KCTC 32145 / OM5) (Oligotropha carboxidovorans) protein is Large ribosomal subunit protein uL18.